The chain runs to 375 residues: Succinyl-diaminopimelate desuccinylase (375 aa).

Position 66 (histidine 66) interacts with Zn(2+). Aspartate 68 is an active-site residue. Aspartate 99 contacts Zn(2+). Residue glutamate 133 is the Proton acceptor of the active site. Residues glutamate 134, glutamate 162, and histidine 348 each contribute to the Zn(2+) site.

Belongs to the peptidase M20A family. DapE subfamily. As to quaternary structure, homodimer. Zn(2+) serves as cofactor. Requires Co(2+) as cofactor.

It catalyses the reaction N-succinyl-(2S,6S)-2,6-diaminopimelate + H2O = (2S,6S)-2,6-diaminopimelate + succinate. Its pathway is amino-acid biosynthesis; L-lysine biosynthesis via DAP pathway; LL-2,6-diaminopimelate from (S)-tetrahydrodipicolinate (succinylase route): step 3/3. Its function is as follows. Catalyzes the hydrolysis of N-succinyl-L,L-diaminopimelic acid (SDAP), forming succinate and LL-2,6-diaminopimelate (DAP), an intermediate involved in the bacterial biosynthesis of lysine and meso-diaminopimelic acid, an essential component of bacterial cell walls. This is Succinyl-diaminopimelate desuccinylase from Klebsiella pneumoniae (strain 342).